Reading from the N-terminus, the 220-residue chain is Ribosomal RNA large subunit methyltransferase E (220 aa).

Over residues 1-10 (MSRSGKDPGK) the composition is skewed to basic and acidic residues. The interval 1-24 (MSRSGKDPGKRVKTARKRSASSTR) is disordered. Residues Gly-75, Trp-77, Asp-94, Asp-110, and Asp-134 each coordinate S-adenosyl-L-methionine. Lys-174 (proton acceptor) is an active-site residue.

This sequence belongs to the class I-like SAM-binding methyltransferase superfamily. RNA methyltransferase RlmE family.

The protein resides in the cytoplasm. It catalyses the reaction uridine(2552) in 23S rRNA + S-adenosyl-L-methionine = 2'-O-methyluridine(2552) in 23S rRNA + S-adenosyl-L-homocysteine + H(+). Functionally, specifically methylates the uridine in position 2552 of 23S rRNA at the 2'-O position of the ribose in the fully assembled 50S ribosomal subunit. In Erythrobacter litoralis (strain HTCC2594), this protein is Ribosomal RNA large subunit methyltransferase E.